We begin with the raw amino-acid sequence, 216 residues long: Protein YabP (216 aa).

The protein is Protein YabP (yabP) of Escherichia coli (strain K12).